We begin with the raw amino-acid sequence, 58 residues long: Metallothionein (58 aa).

The segment at 1–29 (MPGPCCNDVCECAAGGCKTGCVCTSCRCS) is beta. Residues C5, C6, C10, C12, C17, C21, C23, C26, C28, C31, C34, C38, C40, C46, C50, C54, C56, and C57 each contribute to the a divalent metal cation site. The alpha stretch occupies residues 30-58 (PCDKCTSGCKCPSKEECAKTCSKPCECCP).

Metallothioneins have a high content of cysteine residues that bind various heavy metals. Class I MTS in crustacea are involved in the sequestration of elevated levels of heavy-metal ions. The polypeptide is Metallothionein (Astacus astacus (Noble crayfish)).